The chain runs to 475 residues: Probable pectate lyase 7 (475 aa).

The signal sequence occupies residues 1–24; that stretch reads METARLFKLVCVICIASLIPTIRA. N-linked (GlcNAc...) asparagine glycans are attached at residues Asn-67 and Asn-96. The tract at residues 91–117 is disordered; that stretch reads ISSPTNSTRRSLTGRGKGKGKGKWSKL. Ca(2+) is bound by residues Asp-271, Asp-295, and Asp-299. Arg-351 is an active-site residue.

Belongs to the polysaccharide lyase 1 family. Ca(2+) serves as cofactor.

It catalyses the reaction Eliminative cleavage of (1-&gt;4)-alpha-D-galacturonan to give oligosaccharides with 4-deoxy-alpha-D-galact-4-enuronosyl groups at their non-reducing ends.. The protein operates within glycan metabolism; pectin degradation; 2-dehydro-3-deoxy-D-gluconate from pectin: step 2/5. The chain is Probable pectate lyase 7 from Arabidopsis thaliana (Mouse-ear cress).